The sequence spans 394 residues: Succinate--CoA ligase [ADP-forming] subunit beta 1 (394 aa).

One can recognise an ATP-grasp domain in the interval 9–237; it reads RDLFAKHDVP…KAAANPLEAA (229 aa). ATP-binding positions include Lys45, 52–54, Glu92, Pro95, and Glu100; that span reads GRG. 2 residues coordinate Mg(2+): Asn192 and Asp206. Substrate-binding positions include Asn257 and 319–321; that span reads GIT.

Belongs to the succinate/malate CoA ligase beta subunit family. In terms of assembly, heterotetramer of two alpha and two beta subunits. Mg(2+) serves as cofactor.

It carries out the reaction succinate + ATP + CoA = succinyl-CoA + ADP + phosphate. The enzyme catalyses GTP + succinate + CoA = succinyl-CoA + GDP + phosphate. It participates in carbohydrate metabolism; tricarboxylic acid cycle; succinate from succinyl-CoA (ligase route): step 1/1. In terms of biological role, succinyl-CoA synthetase functions in the citric acid cycle (TCA), coupling the hydrolysis of succinyl-CoA to the synthesis of either ATP or GTP and thus represents the only step of substrate-level phosphorylation in the TCA. The beta subunit provides nucleotide specificity of the enzyme and binds the substrate succinate, while the binding sites for coenzyme A and phosphate are found in the alpha subunit. This is Succinate--CoA ligase [ADP-forming] subunit beta 1 from Streptomyces coelicolor (strain ATCC BAA-471 / A3(2) / M145).